The primary structure comprises 127 residues: Snaclec bothroinsularin subunit beta (127 aa).

Cystine bridges form between C2–C13, C30–C123, and C100–C115. In terms of domain architecture, C-type lectin spans Y9–E124.

Belongs to the snaclec family. As to quaternary structure, heterodimer of subunits alpha and beta; disulfide-linked. In terms of tissue distribution, expressed by the venom gland.

Its subcellular location is the secreted. Its function is as follows. Thrombin and prothrombin (F2) inhibitor. The IC(50) of thrombin-induced platelet aggregation and fibrinocoagulation is 62 and 35 nM, respectively. Its inhibitory activity is at least 10-fold lower than that observed for other thrombin inhibitors. This is Snaclec bothroinsularin subunit beta from Bothrops insularis (Golden lancehead).